A 727-amino-acid chain; its full sequence is Glycerol-3-phosphate dehydrogenase, mitochondrial (727 aa).

The transit peptide at 1–42 (MAFQKAVKGTILVGGGALATVLGLSPFAHYRRKQVSLAYVEA) directs the protein to the mitochondrion. 71–99 (DILVIGGGATGCGCALDAVTRGLKTALVE) is a binding site for FAD. A Phosphotyrosine modification is found at Tyr-601. 2 EF-hand domains span residues 623 to 658 (SDID…INVQ) and 659 to 694 (MDEN…VQKG). Ca(2+) contacts are provided by Asp-672, Asn-674, Asn-676, Gln-678, and Glu-683.

This sequence belongs to the FAD-dependent glycerol-3-phosphate dehydrogenase family. FAD serves as cofactor.

It is found in the mitochondrion inner membrane. The catalysed reaction is a quinone + sn-glycerol 3-phosphate = dihydroxyacetone phosphate + a quinol. Its pathway is polyol metabolism; glycerol degradation via glycerol kinase pathway; glycerone phosphate from sn-glycerol 3-phosphate (anaerobic route): step 1/1. With respect to regulation, calcium-binding enhance the activity of the enzyme. Calcium-responsive mitochondrial glycerol-3-phosphate dehydrogenase which seems to be a key component of the pancreatic beta-cell glucose-sensing device. In Mus musculus (Mouse), this protein is Glycerol-3-phosphate dehydrogenase, mitochondrial.